The primary structure comprises 416 residues: NADH-quinone oxidoreductase subunit D (416 aa).

This sequence belongs to the complex I 49 kDa subunit family. NDH-1 is composed of 14 different subunits. Subunits NuoB, C, D, E, F, and G constitute the peripheral sector of the complex.

The protein resides in the cell inner membrane. The catalysed reaction is a quinone + NADH + 5 H(+)(in) = a quinol + NAD(+) + 4 H(+)(out). In terms of biological role, NDH-1 shuttles electrons from NADH, via FMN and iron-sulfur (Fe-S) centers, to quinones in the respiratory chain. The immediate electron acceptor for the enzyme in this species is believed to be ubiquinone. Couples the redox reaction to proton translocation (for every two electrons transferred, four hydrogen ions are translocated across the cytoplasmic membrane), and thus conserves the redox energy in a proton gradient. The protein is NADH-quinone oxidoreductase subunit D of Caulobacter sp. (strain K31).